Consider the following 48-residue polypeptide: ATP synthase protein 8 (48 aa).

Residues 12-32 (QLTYGLLLITVLLILFSQFFL) form a helical membrane-spanning segment.

It belongs to the ATPase protein 8 family. As to quaternary structure, F-type ATPases have 2 components, CF(1) - the catalytic core - and CF(0) - the membrane proton channel.

Its subcellular location is the mitochondrion membrane. Its function is as follows. Mitochondrial membrane ATP synthase (F(1)F(0) ATP synthase or Complex V) produces ATP from ADP in the presence of a proton gradient across the membrane which is generated by electron transport complexes of the respiratory chain. F-type ATPases consist of two structural domains, F(1) - containing the extramembraneous catalytic core and F(0) - containing the membrane proton channel, linked together by a central stalk and a peripheral stalk. During catalysis, ATP synthesis in the catalytic domain of F(1) is coupled via a rotary mechanism of the central stalk subunits to proton translocation. Part of the complex F(0) domain. Minor subunit located with subunit a in the membrane. The chain is ATP synthase protein 8 (ATP8) from Candida glabrata (strain ATCC 2001 / BCRC 20586 / JCM 3761 / NBRC 0622 / NRRL Y-65 / CBS 138) (Yeast).